The sequence spans 127 residues: Large ribosomal subunit protein bL12 (127 aa).

Positions 101–127 (VKTGVSKEEAEDAKKQLVESGAEVEIK) are disordered. The span at 105–117 (VSKEEAEDAKKQL) shows a compositional bias: basic and acidic residues.

Belongs to the bacterial ribosomal protein bL12 family. Homodimer. Part of the ribosomal stalk of the 50S ribosomal subunit. Forms a multimeric L10(L12)X complex, where L10 forms an elongated spine to which 2 to 4 L12 dimers bind in a sequential fashion. Binds GTP-bound translation factors.

In terms of biological role, forms part of the ribosomal stalk which helps the ribosome interact with GTP-bound translation factors. Is thus essential for accurate translation. This chain is Large ribosomal subunit protein bL12, found in Geobacter metallireducens (strain ATCC 53774 / DSM 7210 / GS-15).